A 211-amino-acid chain; its full sequence is Pyridoxine/pyridoxamine 5'-phosphate oxidase (211 aa).

Residues 8–11 (RNEY) and K66 contribute to the substrate site. Residues 61-66 (RVVLLK), 76-77 (FT), K83, and Q105 each bind FMN. Positions 123, 127, and 131 each coordinate substrate. FMN contacts are provided by residues 140–141 (QS) and W184. 190–192 (RLH) contributes to the substrate binding site. R194 contributes to the FMN binding site.

This sequence belongs to the pyridoxamine 5'-phosphate oxidase family. Homodimer. FMN serves as cofactor.

The enzyme catalyses pyridoxamine 5'-phosphate + O2 + H2O = pyridoxal 5'-phosphate + H2O2 + NH4(+). It catalyses the reaction pyridoxine 5'-phosphate + O2 = pyridoxal 5'-phosphate + H2O2. The protein operates within cofactor metabolism; pyridoxal 5'-phosphate salvage; pyridoxal 5'-phosphate from pyridoxamine 5'-phosphate: step 1/1. It participates in cofactor metabolism; pyridoxal 5'-phosphate salvage; pyridoxal 5'-phosphate from pyridoxine 5'-phosphate: step 1/1. Functionally, catalyzes the oxidation of either pyridoxine 5'-phosphate (PNP) or pyridoxamine 5'-phosphate (PMP) into pyridoxal 5'-phosphate (PLP). The polypeptide is Pyridoxine/pyridoxamine 5'-phosphate oxidase (Mannheimia succiniciproducens (strain KCTC 0769BP / MBEL55E)).